Consider the following 690-residue polypeptide: Glycine--tRNA ligase beta subunit (690 aa).

Belongs to the class-II aminoacyl-tRNA synthetase family. Tetramer of two alpha and two beta subunits.

It localises to the cytoplasm. The enzyme catalyses tRNA(Gly) + glycine + ATP = glycyl-tRNA(Gly) + AMP + diphosphate. The sequence is that of Glycine--tRNA ligase beta subunit from Desulfatibacillum aliphaticivorans.